The following is a 129-amino-acid chain: Defensin-like protein 182 (129 aa).

A signal peptide spans 1–26 (METVTSLVFIVNLLIIFTSVVNQARG). Intrachain disulfides connect C29-C70, C36-C55, C39-C64, C43-C66, C83-C129, C94-C114, C99-C123, and C103-C125.

It belongs to the DEFL family.

The protein resides in the secreted. Confers broad-spectrum resistance to pathogens. In Arabidopsis thaliana (Mouse-ear cress), this protein is Defensin-like protein 182 (PDF3.2).